The chain runs to 375 residues: Growth/differentiation factor 8 (375 aa).

Residues 1-18 (MQKLQISVYIYLFVLILA) form the signal peptide. A propeptide spanning residues 19–266 (GPVDLNENSE…VTDTPKRSRR (248 aa)) is cleaved from the precursor. N-linked (GlcNAc...) asparagine glycosylation is present at N71. 4 cysteine pairs are disulfide-bonded: C272-C282, C281-C340, C309-C372, and C313-C374.

Belongs to the TGF-beta family. Homodimer; disulfide-linked. Interacts with WFIKKN2, leading to inhibit its activity. Interacts with FSTL3. Post-translationally, synthesized as large precursor molecule that undergoes proteolytic cleavage to generate an N-terminal propeptide and a disulfide linked C-terminal dimer, which is the biologically active molecule. The circulating form consists of a latent complex of the C-terminal dimer and other proteins, including its propeptide, which maintain the C-terminal dimer in a latent, inactive state. Ligand activation requires additional cleavage of the prodomain by a tolloid-like metalloproteinase.

Its subcellular location is the secreted. Acts specifically as a negative regulator of skeletal muscle growth. In Equus caballus (Horse), this protein is Growth/differentiation factor 8 (MSTN).